Here is a 297-residue protein sequence, read N- to C-terminus: 33 kDa chaperonin (297 aa).

Intrachain disulfides connect Cys233/Cys235 and Cys267/Cys270.

This sequence belongs to the HSP33 family. In terms of processing, under oxidizing conditions two disulfide bonds are formed involving the reactive cysteines. Under reducing conditions zinc is bound to the reactive cysteines and the protein is inactive.

Its subcellular location is the cytoplasm. Redox regulated molecular chaperone. Protects both thermally unfolding and oxidatively damaged proteins from irreversible aggregation. Plays an important role in the bacterial defense system toward oxidative stress. This is 33 kDa chaperonin from Haemophilus ducreyi (strain 35000HP / ATCC 700724).